Here is a 146-residue protein sequence, read N- to C-terminus: uncharacterized protein (146 aa).

The region spanning M1–D120 is the N-acetyltransferase domain.

This sequence belongs to the acetyltransferase family.

This is an uncharacterized protein from Streptococcus pyogenes serotype M6 (strain ATCC BAA-946 / MGAS10394).